Consider the following 270-residue polypeptide: Fluoride-specific ion channel FluC 1 (270 aa).

4 helical membrane passes run 4–24 (IIILVVIGGAFGAMTREFIML), 35–55 (LDILVANVVACFLLGTVTALY), 67–87 (IIGTGMMGGVSTFSSFAYGSV), and 96–116 (AFLIAAAYVTVSVVAGYVAVL). Na(+)-binding residues include G74 and S77.

The protein belongs to the fluoride channel Fluc/FEX (TC 1.A.43) family.

The protein localises to the cell inner membrane. It carries out the reaction fluoride(in) = fluoride(out). Na(+) is not transported, but it plays an essential structural role and its presence is essential for fluoride channel function. Fluoride-specific ion channel. Important for reducing fluoride concentration in the cell, thus reducing its toxicity. The protein is Fluoride-specific ion channel FluC 1 of Brucella abortus biovar 1 (strain 9-941).